The following is a 294-amino-acid chain: MASLRQIAFYGKGGIGKSTTSQNTLAALAEMGQKILIVGCDPKADSTRLILHAKAQDTILSLAASAGSVEDLELEDVMKVGYQDIRCVESGGPEPGVGCAGRGVITSINFLEENGAYENIDYVSYDVLGDVVCGGFAMPIRENKAQEIYIVMSGEMMAMYAANNISKGILKYANSGGVRLGGLICNERQTDKELELAEALAKKLGTQLIYFVPRDNVVQHAELRRMTVLEYAPDSKQADHYRKLAAKVHNNGGKGIIPTPISMDELEDMLMEHGIIKAVDESIIGKTAAELAAS.

ATP is bound at residue 11–18 (GKGGIGKS). [4Fe-4S] cluster is bound at residue C99. R102 is subject to ADP-ribosylarginine; by dinitrogenase reductase ADP-ribosyltransferase. Position 133 (C133) interacts with [4Fe-4S] cluster.

The protein belongs to the NifH/BchL/ChlL family. As to quaternary structure, homodimer. [4Fe-4S] cluster is required as a cofactor. Post-translationally, the reversible ADP-ribosylation of Arg-102 inactivates the nitrogenase reductase and regulates nitrogenase activity.

It catalyses the reaction N2 + 8 reduced [2Fe-2S]-[ferredoxin] + 16 ATP + 16 H2O = H2 + 8 oxidized [2Fe-2S]-[ferredoxin] + 2 NH4(+) + 16 ADP + 16 phosphate + 6 H(+). Its function is as follows. The key enzymatic reactions in nitrogen fixation are catalyzed by the nitrogenase complex, which has 2 components: the iron protein and the molybdenum-iron protein. This chain is Nitrogenase iron protein (nifH), found in Bradyrhizobium diazoefficiens (strain JCM 10833 / BCRC 13528 / IAM 13628 / NBRC 14792 / USDA 110).